Here is a 489-residue protein sequence, read N- to C-terminus: 3-octaprenyl-4-hydroxybenzoate carboxy-lyase (489 aa).

Position 172 (N172) interacts with Mn(2+). Prenylated FMN contacts are provided by residues 175-177 (IYR), 189-191 (RWL), and 194-195 (RG). Mn(2+) is bound at residue E238. Residue D287 is the Proton donor of the active site.

The protein belongs to the UbiD family. As to quaternary structure, homohexamer. Requires prenylated FMN as cofactor. Mn(2+) is required as a cofactor.

The protein localises to the cell membrane. The catalysed reaction is a 4-hydroxy-3-(all-trans-polyprenyl)benzoate + H(+) = a 2-(all-trans-polyprenyl)phenol + CO2. It functions in the pathway cofactor biosynthesis; ubiquinone biosynthesis. Functionally, catalyzes the decarboxylation of 3-octaprenyl-4-hydroxy benzoate to 2-octaprenylphenol, an intermediate step in ubiquinone biosynthesis. This Salmonella paratyphi B (strain ATCC BAA-1250 / SPB7) protein is 3-octaprenyl-4-hydroxybenzoate carboxy-lyase.